A 74-amino-acid polypeptide reads, in one-letter code: Protein RALF-like 25 (74 aa).

The N-terminal stretch at 1 to 22 is a signal peptide; that stretch reads MKTFMIILLVICSILIVGRVEA. Disulfide bonds link cysteine 35–cysteine 44 and cysteine 62–cysteine 68.

Belongs to the plant rapid alkalinization factor (RALF) family.

The protein localises to the secreted. Cell signaling peptide that may regulate plant stress, growth, and development. Mediates a rapid alkalinization of extracellular space by mediating a transient increase in the cytoplasmic Ca(2+) concentration leading to a calcium-dependent signaling events through a cell surface receptor and a concomitant activation of some intracellular mitogen-activated protein kinases. The chain is Protein RALF-like 25 (RALFL25) from Arabidopsis thaliana (Mouse-ear cress).